The following is a 506-amino-acid chain: Cytochrome P450 6a8 (506 aa).

Cysteine 451 provides a ligand contact to heme.

This sequence belongs to the cytochrome P450 family. Heme is required as a cofactor.

It is found in the endoplasmic reticulum membrane. Its subcellular location is the microsome membrane. In terms of biological role, involved in the metabolism of insect hormones and in the breakdown of synthetic insecticides. The polypeptide is Cytochrome P450 6a8 (Cyp6a8) (Drosophila melanogaster (Fruit fly)).